The chain runs to 435 residues: Tol-Pal system protein TolB (435 aa).

A signal peptide spans 1 to 24 (MIPMPKMIRSLLLLFCLLPLGAQA).

The protein belongs to the TolB family. In terms of assembly, the Tol-Pal system is composed of five core proteins: the inner membrane proteins TolA, TolQ and TolR, the periplasmic protein TolB and the outer membrane protein Pal. They form a network linking the inner and outer membranes and the peptidoglycan layer.

The protein localises to the periplasm. Part of the Tol-Pal system, which plays a role in outer membrane invagination during cell division and is important for maintaining outer membrane integrity. This chain is Tol-Pal system protein TolB, found in Thioalkalivibrio sulfidiphilus (strain HL-EbGR7).